A 521-amino-acid chain; its full sequence is GMP synthase [glutamine-hydrolyzing] (521 aa).

Residues 9–203 form the Glutamine amidotransferase type-1 domain; that stretch reads KILILDFGSQ…ISGICQCEKN (195 aa). Residue C86 is the Nucleophile of the active site. Residues H177 and E179 contribute to the active site. One can recognise a GMPS ATP-PPase domain in the interval 204–396; it reads WTTDNIIAKL…LSIPPHIIYR (193 aa). 231–237 contacts ATP; that stretch reads SGGVDSL.

As to quaternary structure, homodimer.

It catalyses the reaction XMP + L-glutamine + ATP + H2O = GMP + L-glutamate + AMP + diphosphate + 2 H(+). The protein operates within purine metabolism; GMP biosynthesis; GMP from XMP (L-Gln route): step 1/1. Its function is as follows. Catalyzes the synthesis of GMP from XMP. This chain is GMP synthase [glutamine-hydrolyzing], found in Ruthia magnifica subsp. Calyptogena magnifica.